Consider the following 92-residue polypeptide: YcgL domain-containing protein VC_1957 (92 aa).

Positions 1-84 (MLCSIYKSPK…PPENLLEQHK (84 aa)) constitute a YcgL domain. The tract at residues 69 to 92 (FLQLPPPPENLLEQHKERKARQTP) is disordered.

The protein is YcgL domain-containing protein VC_1957 of Vibrio cholerae serotype O1 (strain ATCC 39315 / El Tor Inaba N16961).